The chain runs to 535 residues: MFEPVATARHWAVACCTFTIEQEDVVQWLIWALPALVIGLAIGAGIGILIYKKSVQSQIRQIEAEARLQLEATRSEQKDLILRATDEALRLRAEAEAQIREARAALAKQEERLQRKEENLDRKIEGLERRERQLQQRERQMEQLHQEAEQLRQQQRAELERISALSQEEARAIILKRVEDETRDEAARRIREIEKNVREEADKLARKVISMAIQRCASEYVAEVTVSTVALPSEELKGRIIGREGRNIRAFEQLTGVDIIVDDTPEAVTLSCHDPVRREVARLALIKLLKDGRIHPTRIEEVVSKTQQEVEQIMREEGERVAYEANVQGLHPDLIKLLGRLKYRTSYGQNVLQHSLECALLAAHIAAEIGANINVAKTAALLHDIGKAVDHEVQGPHALIGAEIARRLGKSPAIVHAIAAHHNDEEPQTVEAWLVQAVDAISGGRPGARRETLDLYIKRLEALETVATSFTGVQRAFAVQAGREVRVMVQPDAIDDLGSIHLARDVAKKIEESLQYPGQIKVTVIRETRAVDYAR.

A helical membrane pass occupies residues 30 to 50; it reads IWALPALVIGLAIGAGIGILI. Residues 225 to 285 enclose the KH domain; sequence TVSTVALPSE…VRREVARLAL (61 aa). The region spanning 351 to 444 is the HD domain; it reads VLQHSLECAL…VQAVDAISGG (94 aa).

The protein belongs to the RNase Y family.

It localises to the cell membrane. Functionally, endoribonuclease that initiates mRNA decay. The chain is Ribonuclease Y from Roseiflexus sp. (strain RS-1).